We begin with the raw amino-acid sequence, 121 residues long: Small ribosomal subunit protein uS13 (121 aa).

Residues 91–121 (HKRGLPVRGQRTRTNARTRKGPRRAAASLKK) are disordered.

The protein belongs to the universal ribosomal protein uS13 family. In terms of assembly, part of the 30S ribosomal subunit. Forms a loose heterodimer with protein S19. Forms two bridges to the 50S subunit in the 70S ribosome.

Located at the top of the head of the 30S subunit, it contacts several helices of the 16S rRNA. In the 70S ribosome it contacts the 23S rRNA (bridge B1a) and protein L5 of the 50S subunit (bridge B1b), connecting the 2 subunits; these bridges are implicated in subunit movement. Contacts the tRNAs in the A and P-sites. This Bordetella petrii (strain ATCC BAA-461 / DSM 12804 / CCUG 43448) protein is Small ribosomal subunit protein uS13.